The primary structure comprises 126 residues: Glycine cleavage system H protein (126 aa).

The Lipoyl-binding domain occupies 22–104; sequence VAIIGITEYA…YEKAWMVKVE (83 aa). Residue Lys63 is modified to N6-lipoyllysine.

Belongs to the GcvH family. In terms of assembly, the glycine cleavage system is composed of four proteins: P, T, L and H. The cofactor is (R)-lipoate.

In terms of biological role, the glycine cleavage system catalyzes the degradation of glycine. The H protein shuttles the methylamine group of glycine from the P protein to the T protein. Its function is as follows. Is also involved in protein lipoylation via its role as an octanoyl/lipoyl carrier protein intermediate. The protein is Glycine cleavage system H protein of Staphylococcus aureus (strain USA300).